The sequence spans 1216 residues: DNA-directed RNA polymerase subunit beta' (1216 aa).

Zn(2+) contacts are provided by Cys-60, Cys-62, Cys-75, and Cys-78. Positions 450, 452, and 454 each coordinate Mg(2+). Residues Cys-819, Cys-893, Cys-900, and Cys-903 each contribute to the Zn(2+) site.

The protein belongs to the RNA polymerase beta' chain family. As to quaternary structure, the RNAP catalytic core consists of 2 alpha, 1 beta, 1 beta' and 1 omega subunit. When a sigma factor is associated with the core the holoenzyme is formed, which can initiate transcription. Mg(2+) is required as a cofactor. It depends on Zn(2+) as a cofactor.

It catalyses the reaction RNA(n) + a ribonucleoside 5'-triphosphate = RNA(n+1) + diphosphate. DNA-dependent RNA polymerase catalyzes the transcription of DNA into RNA using the four ribonucleoside triphosphates as substrates. This is DNA-directed RNA polymerase subunit beta' from Streptococcus agalactiae serotype Ia (strain ATCC 27591 / A909 / CDC SS700).